Reading from the N-terminus, the 1948-residue chain is Receptor-type tyrosine-protein phosphatase S (1948 aa).

An N-terminal signal peptide occupies residues 1-29 (MAPTWGPGMVSVVGPMGLLVVLLVGGCAA). Over 30–1282 (EEPPRFIKEP…PQPIVDGEEG (1253 aa)) the chain is Extracellular. 3 consecutive Ig-like C2-type domains span residues 33-123 (PRFI…AKLT), 135-233 (PNID…ANLY), and 245-327 (PRFS…AQIT). Disulfide bonds link Cys-54/Cys-107 and Cys-156/Cys-216. Residues 68-72 (KKGKK) form an important for binding to glycosaminoglycan chains region. Asn-263 and Asn-308 each carry an N-linked (GlcNAc...) asparagine glycan. A disulfide bridge connects residues Cys-266 and Cys-311. Fibronectin type-III domains are found at residues 334 to 424 (APGT…TGEQ), 429 to 523 (APRN…TQQG), 527 to 616 (QPMN…TLQS), 621 to 718 (PPQD…TDED), 723 to 831 (PPRK…TKGA), 832 to 930 (VLGR…TPRG), 931 to 1033 (HPQI…FLRD), and 1036 to 1120 (SPKN…TAFN). The segment at 700 to 724 (TEVGPGPESSPVVVRTDEDVPSAPP) is disordered. The segment covering 701-713 (EVGPGPESSPVVV) has biased composition (low complexity). Residue Asn-733 is glycosylated (N-linked (GlcNAc...) asparagine). Asn-940 carries N-linked (GlcNAc...) asparagine glycosylation. Residues 1283 to 1303 (LIWVIGPVLAVVFIICIVIAI) form a helical membrane-spanning segment. The Cytoplasmic portion of the chain corresponds to 1304-1948 (LLYKNKPDSK…YLGSFDHYAT (645 aa)). 2 stretches are compositionally biased toward basic and acidic residues: residues 1311–1321 (DSKRKDSEPRT) and 1331–1340 (APHHPKDPVE). A disordered region spans residues 1311–1340 (DSKRKDSEPRTKCLLNNADLAPHHPKDPVE). 2 Tyrosine-protein phosphatase domains span residues 1393–1648 (LSQE…LLEA) and 1680–1939 (MELE…ALEY). Substrate contacts are provided by residues Asp-1557, 1589–1595 (CSAGVGR), and Gln-1633. The active-site Phosphocysteine intermediate is Cys-1589. Cys-1880 serves as the catalytic Phosphocysteine intermediate.

The protein belongs to the protein-tyrosine phosphatase family. Receptor class 2A subfamily. In terms of assembly, binding to large heparan sulfate proteoglycan structures promotes oligomerization. Binding to chondroitin sulfate proteoglycan does not lead to oligomerization. Interacts (via Ig-like domains) with NTRK3. Interacts (via Ig-like domains) with NTRK1, but does not form detectable complexes with NTRK2. Interacts with PPFIA1, PPFIA2 and PPFIA3. A cleavage occurs, separating the extracellular domain from the transmembrane segment. This process called 'ectodomain shedding' is thought to be involved in receptor desensitization, signal transduction and/or membrane localization. As to expression, detected in peripheral blood plasmacytoid dendritic cells (at protein level). Detected in all tissues tested except for placenta and liver. Detected in peripheral blood plasmacytoid dendritic cells.

It is found in the cell membrane. The protein localises to the cell projection. It localises to the axon. The protein resides in the perikaryon. Its subcellular location is the cytoplasmic vesicle. It is found in the secretory vesicle. The protein localises to the synaptic vesicle membrane. It localises to the synapse. The protein resides in the synaptosome. Its subcellular location is the postsynaptic density. It is found in the neuron projection. The protein localises to the growth cone. The enzyme catalyses O-phospho-L-tyrosyl-[protein] + H2O = L-tyrosyl-[protein] + phosphate. In terms of biological role, cell surface receptor that binds to glycosaminoglycans, including chondroitin sulfate proteoglycans and heparan sulfate proteoglycan. Binding to chondroitin sulfate and heparan sulfate proteoglycans has opposite effects on PTPRS oligomerization and regulation of neurite outgrowth. Contributes to the inhibition of neurite and axonal outgrowth by chondroitin sulfate proteoglycans, also after nerve transection. Plays a role in stimulating neurite outgrowth in response to the heparan sulfate proteoglycan GPC2. Required for normal brain development, especially for normal development of the pituitary gland and the olfactory bulb. Functions as a tyrosine phosphatase. Mediates dephosphorylation of NTRK1, NTRK2 and NTRK3. Plays a role in down-regulation of signaling cascades that lead to the activation of Akt and MAP kinases. Down-regulates TLR9-mediated activation of NF-kappa-B, as well as production of TNF, interferon alpha and interferon beta. The polypeptide is Receptor-type tyrosine-protein phosphatase S (PTPRS) (Homo sapiens (Human)).